A 258-amino-acid polypeptide reads, in one-letter code: Snake venom serine protease catroxase-2 (258 aa).

The signal sequence occupies residues 1 to 18 (MVLIRVLANLLILQLSYA). The propeptide occupies 19–24 (QKSSEL). Residues 25 to 249 (VVGGDECNIN…YNDWIQSIIA (225 aa)) enclose the Peptidase S1 domain. Intrachain disulfides connect C31/C163, C50/C66, C98/C256, C142/C210, C174/C189, and C200/C225. N-linked (GlcNAc...) asparagine glycosylation is present at N44. Residues H65 and D110 each act as charge relay system in the active site. S204 serves as the catalytic Charge relay system.

This sequence belongs to the peptidase S1 family. Snake venom subfamily. As to quaternary structure, monomer. As to expression, expressed by the venom gland.

Its subcellular location is the secreted. Functionally, snake venom serine protease that may act in the hemostasis system of the prey. This Crotalus atrox (Western diamondback rattlesnake) protein is Snake venom serine protease catroxase-2.